The following is a 435-amino-acid chain: Trigger factor (435 aa).

One can recognise a PPIase FKBP-type domain in the interval 163–248; sequence GDFVTFDFKG…VKEIKVKELP (86 aa).

It belongs to the FKBP-type PPIase family. Tig subfamily.

The protein resides in the cytoplasm. It catalyses the reaction [protein]-peptidylproline (omega=180) = [protein]-peptidylproline (omega=0). In terms of biological role, involved in protein export. Acts as a chaperone by maintaining the newly synthesized protein in an open conformation. Functions as a peptidyl-prolyl cis-trans isomerase. The sequence is that of Trigger factor from Geobacter sp. (strain M21).